A 276-amino-acid polypeptide reads, in one-letter code: Anamorsin homolog (276 aa).

An N-terminal SAM-like domain region spans residues Met1 to Trp152. Positions Trp152 to Val189 are linker. Residues Cys195, Cys211, Cys214, and Cys216 each coordinate [2Fe-2S] cluster. Residues Cys195–Cys216 form a fe-S binding site A region. [4Fe-4S] cluster contacts are provided by Cys237, Cys240, Cys248, and Cys251. 2 short sequence motifs (cx2C motif) span residues Cys237 to Cys240 and Cys248 to Cys251. A fe-S binding site B region spans residues Cys237–Cys251.

The protein belongs to the anamorsin family. In terms of assembly, monomer. The cofactor is [2Fe-2S] cluster. It depends on [4Fe-4S] cluster as a cofactor.

The protein localises to the cytoplasm. The protein resides in the mitochondrion intermembrane space. Its function is as follows. Component of the cytosolic iron-sulfur (Fe-S) protein assembly (CIA) machinery. Required for the maturation of extramitochondrial Fe-S proteins. Part of an electron transfer chain functioning in an early step of cytosolic Fe-S biogenesis, facilitating the de novo assembly of a [4Fe-4S] cluster on the cytosolic Fe-S scaffold complex. Electrons are transferred from NADPH via a FAD- and FMN-containing diflavin oxidoreductase. Together with the diflavin oxidoreductase, also required for the assembly of the diferric tyrosyl radical cofactor of ribonucleotide reductase (RNR), probably by providing electrons for reduction during radical cofactor maturation in the catalytic small subunit. In Schistosoma japonicum (Blood fluke), this protein is Anamorsin homolog.